The following is a 127-amino-acid chain: MGQFSILGFIALGGAIGACSRYLVSEFCVLLFGRGFPYGTLTVNVVGSFIMGLLIAAFENEILATEPWRQVIGLGFLGALTTFSTFSMDNVLLMQQGAFFKMGLNILLNVVLSISAAWIGFQLLMRS.

4 helical membrane passes run 4-24, 38-58, 71-91, and 104-124; these read FSIL…RYLV, YGTL…IAAF, VIGL…MDNV, and LNIL…FQLL. Positions 78 and 81 each coordinate Na(+).

This sequence belongs to the fluoride channel Fluc/FEX (TC 1.A.43) family.

Its subcellular location is the cell inner membrane. It catalyses the reaction fluoride(in) = fluoride(out). Its activity is regulated as follows. Na(+) is not transported, but it plays an essential structural role and its presence is essential for fluoride channel function. Its function is as follows. Fluoride-specific ion channel. Important for reducing fluoride concentration in the cell, thus reducing its toxicity. The polypeptide is Fluoride-specific ion channel FluC (Vibrio parahaemolyticus serotype O3:K6 (strain RIMD 2210633)).